We begin with the raw amino-acid sequence, 1123 residues long: Mediator of RNA polymerase II transcription subunit 14 (1123 aa).

Residues lysine 450 to glutamine 484 form a disordered region.

This sequence belongs to the Mediator complex subunit 14 family. Component of the Mediator complex.

Its subcellular location is the nucleus. In terms of biological role, component of the Mediator complex, a coactivator involved in the regulated transcription of nearly all RNA polymerase II-dependent genes. Mediator functions as a bridge to convey information from gene-specific regulatory proteins to the basal RNA polymerase II transcription machinery. Mediator is recruited to promoters by direct interactions with regulatory proteins and serves as a scaffold for the assembly of a functional preinitiation complex with RNA polymerase II and the general transcription factors. This chain is Mediator of RNA polymerase II transcription subunit 14 (RGR1), found in Debaryomyces hansenii (strain ATCC 36239 / CBS 767 / BCRC 21394 / JCM 1990 / NBRC 0083 / IGC 2968) (Yeast).